The chain runs to 649 residues: Lipolysis-stimulated lipoprotein receptor (649 aa).

Residues 1–16 show a composition bias toward gly residues; that stretch reads MQQDGLGVGTRNGSGK. The interval 1 to 21 is disordered; sequence MQQDGLGVGTRNGSGKGRSVH. At 1-259 the chain is on the extracellular side; sequence MQQDGLGVGT…PGFQAGPIED (259 aa). Residues 86–234 enclose the Ig-like V-type domain; that stretch reads PARAIQVTVS…DLQGNNEAYA (149 aa). A disulfide bond links cysteine 111 and cysteine 218. The helical transmembrane segment at 260–280 threads the bilayer; sequence WLFVVVVCLAAFLIFLLLGIC. The Cytoplasmic segment spans residues 281–649; the sequence is WCQCCPHTCC…LALSRESLVV (369 aa). Threonine 336 carries the phosphothreonine modification. Phosphoserine occurs at positions 365, 371, 389, 432, and 436. Residues 414–649 are disordered; sequence NFDPSRPGPP…LALSRESLVV (236 aa). Over residues 426–444 the composition is skewed to basic and acidic residues; it reads RVERAMSEVTSLHEDDWRS. Phosphothreonine is present on threonine 453. Phosphoserine is present on residues serine 464, serine 467, and serine 493. A Phosphothreonine modification is found at threonine 501. The span at 502–518 shows a compositional bias: polar residues; sequence PPSTAESGSRSPTSNGG. Residues serine 528 and serine 530 each carry the phosphoserine modification. The span at 529–565 shows a compositional bias: basic and acidic residues; that stretch reads RSRDDLYDQDDSRDFPRSRDPHYDDFRSRERPPADPR. A Phosphotyrosine modification is found at tyrosine 535. Phosphoserine occurs at positions 540 and 579. A compositionally biased stretch (basic and acidic residues) spans 589–609; it reads RLLEEAVRKKGSEERRRPHKE. Serine 631 is subject to Phosphoserine. A Glycyl lysine isopeptide (Lys-Gly) (interchain with G-Cter in ubiquitin) cross-link involves residue lysine 638. A phosphoserine mark is found at serine 643 and serine 646.

This sequence belongs to the immunoglobulin superfamily. LISCH7 family. Homotrimer or homotetramer. Assembles into cell-cell contacts. Interacts (via the cytoplasmic domain) with MARVELD2 (via C-terminal cytoplasmic domain); the interaction is required to recruit MARVELD2 to tricellular contacts. Interacts with OCLN. Phosphorylation at Ser-365 by MAPK8/JNK1 and MAPK9/JNK2 may be required for exclusive localization at tricellular tight junstions. Post-translationally, polyubiquitinated at Lys-638 via 'Lys-63'-linked ubiquitin chains; deubiquitinated by USP53.

The protein localises to the cell membrane. It is found in the cell junction. It localises to the tight junction. In terms of biological role, probable role in the clearance of triglyceride-rich lipoprotein from blood. Binds chylomicrons, LDL and VLDL in presence of free fatty acids and allows their subsequent uptake in the cells. Maintains epithelial barrier function by recruiting MARVELD2/tricellulin to tricellular tight junctions. The chain is Lipolysis-stimulated lipoprotein receptor from Homo sapiens (Human).